The sequence spans 296 residues: MSVPKIVLFYVFTPLADPEAVKLWQLNLAQRSGVKGRIIVSEQGINATVGGDIHDVKAYVRGLKEYAPFQHADIKWSDGAGDDFPRLSVKVRPELVTFDAPDLIRVTEHGVEGGGTHLTPHEVHELVERRGEDVVFFDGRNQLEAEIGRFRGAVVPRTETTRDFLRELDSGAYDHLKDKALVTYCTGGIRCEVLSGLLRNRGFRDVYQLDGGIVRYGEAYGDRGLWDGSLYVFDERRHMEFSLSARSLGRCVQCGEATPRYVNCANQQCRRLFLCCETCTGAGARTRCADCVPVAA.

The 96-residue stretch at 130–225 (RGEDVVFFDG…YGEAYGDRGL (96 aa)) folds into the Rhodanese domain. C185 serves as the catalytic Cysteine persulfide intermediate.

The protein belongs to the TrhO family.

It carries out the reaction uridine(34) in tRNA + AH2 + O2 = 5-hydroxyuridine(34) in tRNA + A + H2O. In terms of biological role, catalyzes oxygen-dependent 5-hydroxyuridine (ho5U) modification at position 34 in tRNAs. This is tRNA uridine(34) hydroxylase from Kocuria rhizophila (strain ATCC 9341 / DSM 348 / NBRC 103217 / DC2201).